The following is a 180-amino-acid chain: Small ribosomal subunit protein uS4 (180 aa).

In terms of domain architecture, S4 RNA-binding spans 103-174 (RRLQTIVYKK…HPERMMIEKA (72 aa)).

This sequence belongs to the universal ribosomal protein uS4 family. Part of the 30S ribosomal subunit. Contacts protein S5. The interaction surface between S4 and S5 is involved in control of translational fidelity.

One of the primary rRNA binding proteins, it binds directly to 16S rRNA where it nucleates assembly of the body of the 30S subunit. Functionally, with S5 and S12 plays an important role in translational accuracy. The protein is Small ribosomal subunit protein uS4 of Pyrococcus abyssi (strain GE5 / Orsay).